Reading from the N-terminus, the 171-residue chain is 3-hydroxyanthranilate 3,4-dioxygenase (171 aa).

Arg44 serves as a coordination point for O2. Positions 48, 54, and 92 each coordinate Fe cation. Glu54 contributes to the substrate binding site. The substrate site is built by Arg96 and Glu106. 4 residues coordinate a divalent metal cation: Cys121, Cys126, Cys160, and Cys163.

Belongs to the 3-HAO family. Fe(2+) serves as cofactor.

It localises to the cytoplasm. It catalyses the reaction 3-hydroxyanthranilate + O2 = (2Z,4Z)-2-amino-3-carboxymuconate 6-semialdehyde. The protein operates within cofactor biosynthesis; NAD(+) biosynthesis; quinolinate from L-kynurenine: step 3/3. In terms of biological role, catalyzes the oxidative ring opening of 3-hydroxyanthranilate to 2-amino-3-carboxymuconate semialdehyde, which spontaneously cyclizes to quinolinate. The chain is 3-hydroxyanthranilate 3,4-dioxygenase from Yarrowia lipolytica (strain CLIB 122 / E 150) (Yeast).